A 389-amino-acid chain; its full sequence is Galactokinase (389 aa).

Substrate is bound at residue Glu-33–Asp-36. ATP contacts are provided by residues Ser-67 and Gly-124 to Ser-130. Mg(2+) contacts are provided by Ser-130 and Glu-162. Asp-174 (proton acceptor) is an active-site residue. Position 224 (Tyr-224) interacts with substrate.

This sequence belongs to the GHMP kinase family. GalK subfamily.

The protein localises to the cytoplasm. It catalyses the reaction alpha-D-galactose + ATP = alpha-D-galactose 1-phosphate + ADP + H(+). It functions in the pathway carbohydrate metabolism; galactose metabolism. Functionally, catalyzes the transfer of the gamma-phosphate of ATP to D-galactose to form alpha-D-galactose-1-phosphate (Gal-1-P). The protein is Galactokinase of Fusobacterium nucleatum subsp. nucleatum (strain ATCC 25586 / DSM 15643 / BCRC 10681 / CIP 101130 / JCM 8532 / KCTC 2640 / LMG 13131 / VPI 4355).